The following is a 193-amino-acid chain: Flagellin B3 (193 aa).

A propeptide spanning residues 1 to 12 is cleaved from the precursor; the sequence is MFEFITDEDERG.

The protein belongs to the archaeal flagellin family. In terms of processing, glycosylated.

The protein localises to the archaeal flagellum. In terms of biological role, flagellin is the subunit protein which polymerizes to form the filaments of archaeal flagella. This is Flagellin B3 (flaB3) from Halobacterium salinarum (strain ATCC 700922 / JCM 11081 / NRC-1) (Halobacterium halobium).